The sequence spans 342 residues: Methylthioribose-1-phosphate isomerase (342 aa).

Substrate-binding positions include 49–51, arginine 86, and glutamine 187; that span reads RGA. The active-site Proton donor is the aspartate 228. Residue 238–239 participates in substrate binding; it reads NK.

The protein belongs to the eIF-2B alpha/beta/delta subunits family. MtnA subfamily.

It catalyses the reaction 5-(methylsulfanyl)-alpha-D-ribose 1-phosphate = 5-(methylsulfanyl)-D-ribulose 1-phosphate. It functions in the pathway amino-acid biosynthesis; L-methionine biosynthesis via salvage pathway; L-methionine from S-methyl-5-thio-alpha-D-ribose 1-phosphate: step 1/6. Catalyzes the interconversion of methylthioribose-1-phosphate (MTR-1-P) into methylthioribulose-1-phosphate (MTRu-1-P). In Enterobacter sp. (strain 638), this protein is Methylthioribose-1-phosphate isomerase.